Consider the following 199-residue polypeptide: Recombination protein RecR (199 aa).

A C4-type zinc finger spans residues 57-72 (CSVCGNITEQDPCAIC). The region spanning 80 to 176 (STIMVVEEAK…KVTRLAAGLA (97 aa)) is the Toprim domain.

This sequence belongs to the RecR family.

In terms of biological role, may play a role in DNA repair. It seems to be involved in an RecBC-independent recombinational process of DNA repair. It may act with RecF and RecO. The protein is Recombination protein RecR of Lactobacillus delbrueckii subsp. bulgaricus (strain ATCC BAA-365 / Lb-18).